Reading from the N-terminus, the 431-residue chain is Tyrosine--tRNA ligase (431 aa).

Tyr34 is an L-tyrosine binding site. Positions 39–48 (PTADSLHIGH) match the 'HIGH' region motif. L-tyrosine contacts are provided by Tyr171 and Gln175. The 'KMSKS' region motif lies at 231 to 235 (KFGKT). Residue Lys234 coordinates ATP. The S4 RNA-binding domain maps to 353-422 (INVVEALVKT…GKYTILRRGK (70 aa)).

This sequence belongs to the class-I aminoacyl-tRNA synthetase family. TyrS type 1 subfamily. As to quaternary structure, homodimer.

The protein resides in the cytoplasm. The catalysed reaction is tRNA(Tyr) + L-tyrosine + ATP = L-tyrosyl-tRNA(Tyr) + AMP + diphosphate + H(+). In terms of biological role, catalyzes the attachment of tyrosine to tRNA(Tyr) in a two-step reaction: tyrosine is first activated by ATP to form Tyr-AMP and then transferred to the acceptor end of tRNA(Tyr). In Neisseria meningitidis serogroup C (strain 053442), this protein is Tyrosine--tRNA ligase.